We begin with the raw amino-acid sequence, 302 residues long: Endochitinase 4 (302 aa).

Positions 1-18 (EFTALSLLFSLLLLTASA) are cleaved as a signal peptide. Positions 19–60 (EQCGKQAGGARCAAGLCCSNFGWCGNTNDYCGPGKCQSQCPS) constitute a Chitin-binding type-1 domain. Cystine bridges form between cysteine 21–cysteine 36, cysteine 30–cysteine 42, cysteine 35–cysteine 49, and cysteine 54–cysteine 58. The tract at residues 59-79 (PSGPSPKPPTPGPGPSGGDIG) is disordered. Over residues 61-72 (GPSPKPPTPGPG) the composition is skewed to pro residues. The active-site Proton donor is glutamate 144. Cysteine 162 and cysteine 182 are oxidised to a cystine.

The protein belongs to the glycosyl hydrolase 19 family. Chitinase class I subfamily.

It localises to the vacuole. The enzyme catalyses Random endo-hydrolysis of N-acetyl-beta-D-glucosaminide (1-&gt;4)-beta-linkages in chitin and chitodextrins.. In terms of biological role, defense against chitin-containing fungal pathogens. This is Endochitinase 4 (CHTB4) from Solanum tuberosum (Potato).